A 419-amino-acid chain; its full sequence is L-rhamnose isomerase (419 aa).

3 residues coordinate Mn(2+): His-262, Asp-294, and Asp-296.

It belongs to the rhamnose isomerase family. In terms of assembly, homotetramer. It depends on Mn(2+) as a cofactor.

It is found in the cytoplasm. The enzyme catalyses L-rhamnopyranose = L-rhamnulose. The protein operates within carbohydrate degradation; L-rhamnose degradation; glycerone phosphate from L-rhamnose: step 1/3. Its function is as follows. Catalyzes the interconversion of L-rhamnose and L-rhamnulose. This Escherichia coli O127:H6 (strain E2348/69 / EPEC) protein is L-rhamnose isomerase.